Here is a 745-residue protein sequence, read N- to C-terminus: Junction plakoglobin (745 aa).

Met-1 carries the N-acetylmethionine modification. An O-linked (GlcNAc) threonine glycan is attached at Thr-14. A phosphoserine mark is found at Ser-99 and Ser-125. 12 ARM repeats span residues 132 to 171 (NYQDDAELATRALPELTKLLNDEDPVVVTKAAMIVNQLSK), 172 to 215 (KEAS…LSHH), 216 to 255 (REGLLAIFKSGGIPALVRMLSSPVESVLFYAITTLHNLLL), 258 to 297 (EGAKMAVRLADGLQKMVPLLNKNNPKFLAITTDCLQLLAY), 298 to 341 (GNQE…LSVC), 342 to 381 (PSNKPAIVEAGGMQALGKHLTSNSPRLVQNCLWTLRNLSD), 383 to 420 (ATKQEGLENVLKILVNQLSVDDVNVLTCATGTLSNLTC), 423 to 464 (SKNK…HLTS), 470 to 510 (EMAQ…NLAL), 512 to 551 (PANHAPLQEAAVIPRLVQLLVKAHQDAQRHVAAGTQQPYT), 574 to 613 (PMNRMEIFRLNTIPLFVQLLYSSVENIQRVAAGVLCELAQ), and 615 to 661 (KEAA…PDYR). Residues 132–297 (NYQDDAELAT…TTDCLQLLAY (166 aa)) form an interaction with DSC1 and DSG1 region. Ser-182 carries the phosphoserine modification. The tract at residues 574-661 (PMNRMEIFRL…ISEDKNPDYR (88 aa)) is interaction with DSC1. Ser-665 and Ser-730 each carry phosphoserine.

This sequence belongs to the beta-catenin family. Homodimer. Component of an E-cadherin/catenin adhesion complex composed of at least E-cadherin/CDH1 and gamma-catenin/JUP, and possibly alpha-catenin/CTNNA1; the complex is located to adherens junctions. The stable association of CTNNA1 is controversial as CTNNA1 was shown not to bind to F-actin when assembled in the complex. Interacts with MUC1. Interacts with CAV1. Interacts with PTPRJ. Interacts with DSG1. Interacts with DSC1 and DSC2. Interacts with PKP2. Interacts with PKP3 (via N-terminus); the interaction is required for PKP3 localization to desmosome cell-cell junctions. Interacts with DSG4. May be phosphorylated by FER. Expressed in the heart (at protein level).

Its subcellular location is the cell junction. It localises to the adherens junction. The protein resides in the desmosome. It is found in the cytoplasm. The protein localises to the cytoskeleton. Its subcellular location is the cell membrane. It localises to the nucleus. Functionally, common junctional plaque protein. The membrane-associated plaques are architectural elements in an important strategic position to influence the arrangement and function of both the cytoskeleton and the cells within the tissue. The presence of plakoglobin in both the desmosomes and in the intermediate junctions suggests that it plays a central role in the structure and function of submembranous plaques. Acts as a substrate for VE-PTP and is required by it to stimulate VE-cadherin function in endothelial cells. Can replace beta-catenin in E-cadherin/catenin adhesion complexes which are proposed to couple cadherins to the actin cytoskeleton. This Rattus norvegicus (Rat) protein is Junction plakoglobin.